A 601-amino-acid chain; its full sequence is Glutathione-regulated potassium-efflux system protein KefB (601 aa).

13 helical membrane-spanning segments follow: residues 4–24 (SDLL…VPLA), 29–49 (IGAV…GLGF), 55–75 (EILH…GLEL), 87–107 (IFGV…GLLM), 115–135 (AAVV…LQLM), 152–172 (VLLF…LLAG), 177–197 (HVNW…LIGG), 207–227 (FIAS…LVLG), 230–250 (LFME…GVLL), 268–288 (GLLL…GVLY), 291–311 (LLWV…VLYL), 326–346 (FAGV…LPAS), and 356–376 (ALLL…MKGI). Residues 400–519 (KPQVIIVGFG…AGVTQFSRET (120 aa)) enclose the RCK N-terminal domain.

Belongs to the monovalent cation:proton antiporter 2 (CPA2) transporter (TC 2.A.37) family. KefB subfamily. In terms of assembly, interacts with the regulatory subunit KefG.

It localises to the cell inner membrane. In terms of biological role, pore-forming subunit of a potassium efflux system that confers protection against electrophiles. Catalyzes K(+)/H(+) antiport. The polypeptide is Glutathione-regulated potassium-efflux system protein KefB (Klebsiella pneumoniae (strain 342)).